Reading from the N-terminus, the 426-residue chain is Trigger factor (426 aa).

In terms of domain architecture, PPIase FKBP-type spans 166–249 (GDIVTFDFKG…IIEVKARELP (84 aa)).

The protein belongs to the FKBP-type PPIase family. Tig subfamily.

It is found in the cytoplasm. The catalysed reaction is [protein]-peptidylproline (omega=180) = [protein]-peptidylproline (omega=0). Its function is as follows. Involved in protein export. Acts as a chaperone by maintaining the newly synthesized protein in an open conformation. Functions as a peptidyl-prolyl cis-trans isomerase. This chain is Trigger factor, found in Mesoplasma florum (strain ATCC 33453 / NBRC 100688 / NCTC 11704 / L1) (Acholeplasma florum).